Consider the following 406-residue polypeptide: tRNA-specific 2-thiouridylase MnmA (406 aa).

ATP-binding positions include 42–49 (GLSGGVDS) and leucine 68. Residue cysteine 129 is the Nucleophile of the active site. Residues cysteine 129 and cysteine 237 are joined by a disulfide bond. ATP is bound at residue glycine 154. Residues 187–189 (KDQ) are interaction with tRNA. The active-site Cysteine persulfide intermediate is cysteine 237. Residues 342–343 (RY) form an interaction with tRNA region.

This sequence belongs to the MnmA/TRMU family.

The protein resides in the cytoplasm. It carries out the reaction S-sulfanyl-L-cysteinyl-[protein] + uridine(34) in tRNA + AH2 + ATP = 2-thiouridine(34) in tRNA + L-cysteinyl-[protein] + A + AMP + diphosphate + H(+). Its function is as follows. Catalyzes the 2-thiolation of uridine at the wobble position (U34) of tRNA, leading to the formation of s(2)U34. This chain is tRNA-specific 2-thiouridylase MnmA, found in Prochlorococcus marinus (strain MIT 9211).